Here is a 98-residue protein sequence, read N- to C-terminus: NADH-ubiquinone oxidoreductase chain 4L (98 aa).

3 helical membrane passes run 1–21, 29–49, and 59–79; these read MSLVHMNILLAFTMSLTGLLM, ALLCLEGMMLSLFILMTITIL, and TPIILLVFAACEAAVGLALLV.

This sequence belongs to the complex I subunit 4L family. Core subunit of respiratory chain NADH dehydrogenase (Complex I) which is composed of 45 different subunits.

It localises to the mitochondrion inner membrane. The enzyme catalyses a ubiquinone + NADH + 5 H(+)(in) = a ubiquinol + NAD(+) + 4 H(+)(out). Core subunit of the mitochondrial membrane respiratory chain NADH dehydrogenase (Complex I) which catalyzes electron transfer from NADH through the respiratory chain, using ubiquinone as an electron acceptor. Part of the enzyme membrane arm which is embedded in the lipid bilayer and involved in proton translocation. The protein is NADH-ubiquinone oxidoreductase chain 4L (MT-ND4L) of Lipotes vexillifer (Yangtze river dolphin).